We begin with the raw amino-acid sequence, 132 residues long: Small ribosomal subunit protein eS12 (132 aa).

It belongs to the eukaryotic ribosomal protein eS12 family.

The protein resides in the cytoplasm. In Xenopus laevis (African clawed frog), this protein is Small ribosomal subunit protein eS12 (rps12).